The sequence spans 334 residues: Formylmethanofuran--tetrahydromethanopterin formyltransferase (334 aa).

The protein belongs to the FTR family. In terms of assembly, homotetramer.

It is found in the cytoplasm. It catalyses the reaction N-formylmethanofuran + 5,6,7,8-tetrahydromethanopterin + H(+) = N(5)-formyl-5,6,7,8-tetrahydromethanopterin + methanofuran. It participates in one-carbon metabolism; formaldehyde degradation; formate from formaldehyde (H(4)MPT route): step 4/5. Functionally, catalyzes the transfer of a formyl group from 5-formyl tetrahydromethanopterin (5-formyl-H(4)MPT) to methanofuran (MFR) to produce formylmethanofuran (formyl-MFR) and tetrahydromethanopterin (H(4)MPT). This Rhodopirellula baltica (strain DSM 10527 / NCIMB 13988 / SH1) protein is Formylmethanofuran--tetrahydromethanopterin formyltransferase.